Reading from the N-terminus, the 585-residue chain is Lipoprotein LpqB (585 aa).

Positions 1–17 (MGRKLLGLLMLAVLLAG) are cleaved as a signal peptide. A lipid anchor (N-palmitoyl cysteine) is attached at cysteine 18. The S-diacylglycerol cysteine moiety is linked to residue cysteine 18. Disordered stretches follow at residues 24–46 (SSAP…KPTP) and 560–585 (PSAD…VLPG).

Belongs to the LpqB lipoprotein family.

It is found in the cell membrane. In Mycobacterium paratuberculosis, this protein is Lipoprotein LpqB.